A 490-amino-acid chain; its full sequence is MERAKSRKPHIMMIPYPLQGHVIPFVHLAIKLASHGFTITFVNTDSIHHHISTAHQDDAGDIFSAARSSGQHDIRYTTVSDGFPLDFDRSLNHDQFFEGILHVFSAHVDDLIAKLSRRDDPPVTCLIADTFYVWSSMICDKHNLVNVSFWTEPALVLNLYYHMDLLISNGHFKSLDNRKDVIDYVPGVKAIEPKDLMSYLQVSDKDVDTNTVVYRILFKAFKDVKRADFVVCNTVQELEPDSLSALQAKQPVYAIGPVFSTDSVVPTSLWAESDCTEWLKGRPTGSVLYVSFGSYAHVGKKEIVEIAHGLLLSGISFIWVLRPDIVGSNVPDFLPAGFVDQAQDRGLVVQWCCQMEVISNPAVGGFFTHCGWNSILESVWCGLPLLCYPLLTDQFTNRKLVVDDWCIGINLCEKKTITRDQVSANVKRLMNGETSSELRNNVEKVKRHLKDAVTTVGSSETNFNLFVSEVRNRIETKLCNVNGLEISPSN.

Residues Ser294, 352-354, 369-377, and 391-394 contribute to the UDP-alpha-D-glucose site; these read CCQ, HCGWNSILE, and LTDQ.

Belongs to the UDP-glycosyltransferase family.

The protein is UDP-glycosyltransferase 86A1 (UGT86A1) of Arabidopsis thaliana (Mouse-ear cress).